Here is a 1072-residue protein sequence, read N- to C-terminus: DNA-directed RNA polymerase subunit beta (1072 aa).

The protein belongs to the RNA polymerase beta chain family. As to quaternary structure, in plastids the minimal PEP RNA polymerase catalytic core is composed of four subunits: alpha, beta, beta', and beta''. When a (nuclear-encoded) sigma factor is associated with the core the holoenzyme is formed, which can initiate transcription.

Its subcellular location is the plastid. The protein localises to the chloroplast. The enzyme catalyses RNA(n) + a ribonucleoside 5'-triphosphate = RNA(n+1) + diphosphate. Functionally, DNA-dependent RNA polymerase catalyzes the transcription of DNA into RNA using the four ribonucleoside triphosphates as substrates. This chain is DNA-directed RNA polymerase subunit beta, found in Lepidium virginicum (Virginia pepperweed).